A 457-amino-acid polypeptide reads, in one-letter code: Bifunctional F420 biosynthesis protein FbiB (457 aa).

The interval Met1–Gly253 is coenzyme F420:L-glutamate ligase. GTP-binding positions include Leu29–Phe32, Ser59, and Lys64. Asp118 provides a ligand contact to a divalent metal cation. A GTP-binding site is contributed by Asn121. Residues Asp159 and Thr160 each contribute to the a divalent metal cation site. The tract at residues Thr254–Lys457 is dehydro-coenzyme F420-0 reductase. FMN-binding positions include Arg269–Arg273 and Ala297. Residue Asp329 coordinates coenzyme F420-(gamma-Glu)n. The FMN site is built by Gly408 and Arg445.

In the N-terminal section; belongs to the CofE family. It depends on Mg(2+) as a cofactor. Requires Mn(2+) as cofactor. K(+) serves as cofactor.

It carries out the reaction oxidized coenzyme F420-0 + GTP + L-glutamate = oxidized coenzyme F420-1 + GDP + phosphate + H(+). It catalyses the reaction oxidized coenzyme F420-1 + GTP + L-glutamate = oxidized coenzyme F420-2 + GDP + phosphate + H(+). The enzyme catalyses oxidized coenzyme F420-(gamma-L-Glu)(n) + GTP + L-glutamate = oxidized coenzyme F420-(gamma-L-Glu)(n+1) + GDP + phosphate + H(+). The catalysed reaction is oxidized coenzyme F420-0 + FMN + H(+) = dehydro coenzyme F420-0 + FMNH2. The protein operates within cofactor biosynthesis; coenzyme F420 biosynthesis. Bifunctional enzyme that catalyzes the GTP-dependent successive addition of multiple gamma-linked L-glutamates to the L-lactyl phosphodiester of 7,8-didemethyl-8-hydroxy-5-deazariboflavin (F420-0) to form polyglutamated F420 derivatives, and the FMNH2-dependent reduction of dehydro-F420-0 to form F420-0. The protein is Bifunctional F420 biosynthesis protein FbiB of Mycobacterium leprae (strain TN).